The sequence spans 462 residues: Cysteine--tRNA ligase (462 aa).

Position 30 (cysteine 30) interacts with Zn(2+). The 'HIGH' region motif lies at 32–42; that stretch reads PTVYDRAHLGN. Zn(2+) contacts are provided by cysteine 221, histidine 246, and glutamate 250. The 'KMSKS' region signature appears at 279 to 283; it reads KMSKS. Position 282 (lysine 282) interacts with ATP.

It belongs to the class-I aminoacyl-tRNA synthetase family. As to quaternary structure, monomer. The cofactor is Zn(2+).

The protein localises to the cytoplasm. It carries out the reaction tRNA(Cys) + L-cysteine + ATP = L-cysteinyl-tRNA(Cys) + AMP + diphosphate. This Paracoccus denitrificans (strain Pd 1222) protein is Cysteine--tRNA ligase.